The chain runs to 367 residues: Alanine racemase (367 aa).

The Proton acceptor; specific for D-alanine role is filled by K40. K40 carries the post-translational modification N6-(pyridoxal phosphate)lysine. R136 lines the substrate pocket. Y263 (proton acceptor; specific for L-alanine) is an active-site residue. Residue M310 participates in substrate binding.

The protein belongs to the alanine racemase family. Pyridoxal 5'-phosphate is required as a cofactor.

The catalysed reaction is L-alanine = D-alanine. The protein operates within amino-acid biosynthesis; D-alanine biosynthesis; D-alanine from L-alanine: step 1/1. Catalyzes the interconversion of L-alanine and D-alanine. May also act on other amino acids. The protein is Alanine racemase (alr) of Streptococcus pneumoniae serotype 19F (strain G54).